The following is a 3726-amino-acid chain: Zinc finger homeobox protein 3 (3726 aa).

2 disordered regions span residues 1-79 and 95-129; these read MEGC…SKEV and MEHH…VENL. The segment at 79-103 adopts a C2H2-type 1 zinc-finger fold; the sequence is VSCNECSASFSSLQTYMEHHCPGTH. Positions 116–126 are enriched in acidic residues; sequence TSEEGEEESDV. A C2H2-type 2 zinc finger spans residues 282–305; sequence LMCFLCKLSFGYVRSFVTHAVHDH. The disordered stretch occupies residues 417–557; the sequence is SVPLGPLASS…GPASTTSNSA (141 aa). The residue at position 426 (Ser426) is a Phosphoserine. Thr428 is modified (phosphothreonine). Over residues 431 to 459 the composition is skewed to basic and acidic residues; sequence SEGKDSGAAEGDKQESGGHQDCFSEKVEP. Acidic residues-rich tracts occupy residues 460-491 and 500-510; these read AEEE…EEEE and DLEEELEDSPS. Positions 528–557 are enriched in polar residues; it reads SNPSISNSPLMPNVLQTLSRGPASTTSNSA. Phosphoserine is present on residues Ser535 and Ser573. The segment at 590-621 is disordered; sequence DFADESANKDSATAPEPNESTEGDDGGFVPHH. C2H2-type zinc fingers lie at residues 641–664, 672–695, and 727–751; these read VECP…TMMH, LKCP…KEKH, and FRCE…SDKH. A C2H2-type 6; atypical zinc finger spans residues 805–829; that stretch reads WRCEVCDYETNVARNLRIHMTSEKH. The segment at 946 to 969 adopts a C2H2-type 7; degenerate zinc-finger fold; sequence FQCAVCNKFTTDNLDMLGLHMNVE. A C2H2-type 8; atypical zinc finger spans residues 985-1009; that stretch reads YQCKLCRYNTQLKANFQLHCKTDKH. A C2H2-type 9; atypical zinc finger spans residues 1041–1065; that stretch reads LKCNACDYYTNSLEKLRLHTVNSRH. The C2H2-type 10; atypical zinc-finger motif lies at 1089-1113; that stretch reads YHCVLCNYSTKAKLNLIQHVRSMKH. The segment at 1125 to 1228 is disordered; it reads LQKGLPEEDE…KRPKASEEIK (104 aa). The span at 1149–1159 shows a compositional bias: acidic residues; it reads DPEEPVEDAEG. Polar residues-rich tracts occupy residues 1175 to 1191 and 1199 to 1217; these read GSGS…SSSQ and SPAT…TPLS. Phosphoserine is present on Ser1207. A C2H2-type 11; atypical zinc finger spans residues 1233 to 1256; it reads YQCPYCKYSNADVNRLRVHAMTQH. Residues 1262–1285 form a C2H2-type 12 zinc finger; it reads LRCPLCQDMLNNKIHLQLHLTHLH. A disordered region spans residues 1320-1361; sequence DGNSTLEEVGKQPEASEDPGKNILPPASMEHGGDLKPTSADP. C2H2-type zinc fingers lie at residues 1370–1395, 1411–1433, and 1439–1462; these read FLCW…NEVH, YRCN…SQYH, and TMCC…ETSH. Residues 1500–1539 are disordered; it reads EEDKEEESDLEDKQSPTGSDSGSVQEDSGSEPKRALPFRK. A compositionally biased stretch (polar residues) spans 1514–1526; sequence SPTGSDSGSVQED. A C2H2-type 16 zinc finger spans residues 1555 to 1579; sequence YKCTVCKESFTQKNILLVHYNSVSH. The residue at position 1600 (Ser1600) is a Phosphoserine. Residues 1606 to 1630 form a C2H2-type 17 zinc finger; the sequence is FKCNTCNVAYSQSSTLEIHMRSVLH. 3 disordered regions span residues 1639 to 1678, 1706 to 1738, and 1866 to 1943; these read LEAA…TATN, NPIS…QQQQ, and LSQS…PRIA. Positions 1643 to 1669 are enriched in low complexity; it reads SGNSNGTGNSGGVSLSSSTPSPVGSSG. A compositionally biased stretch (basic and acidic residues) spans 1717–1727; it reads EPKEANRKKLA. Low complexity predominate over residues 1866-1878; that stretch reads LSQSHSALLQPSQ. The segment covering 1879–1902 has biased composition (basic and acidic residues); that stretch reads HPEKKNKVVIKEKDKESQREREGP. A C2H2-type 18 zinc finger spans residues 1990–2013; the sequence is LECDSCGKLFSNILILKSHQEHVH. Disordered regions lie at residues 2037–2089 and 2211–2249; these read YPLR…AQPS and NKDS…WGSK. The segment covering 2041-2066 has biased composition (pro residues); sequence PQTPEPPPPPPPPPPPPLPTAPPQPA. The homeobox 1 DNA-binding region spans 2152–2211; that stretch reads NKRPRTRITDDQLRVLRQYFDINNSPSEEQIKEMADKSGLPQKVIKHWFRNTLFKERQRN. Polar residues predominate over residues 2214 to 2223; sequence SPYNFSNPPI. The homeobox 2 DNA-binding region spans 2249 to 2308; the sequence is KRSSRTRFTDYQLRVLQDFFDANAYPKDDEFEQLSNLLNLPTRVIVVWFQNARQKARKNY. The segment at 2335–2358 adopts a C2H2-type 19; atypical zinc-finger fold; sequence YQCKKCSLVFQRIFDLIKHQKKLC. Residue Lys2356 forms a Glycyl lysine isopeptide (Lys-Gly) (interchain with G-Cter in SUMO1) linkage. 2 disordered regions span residues 2383 to 2405 and 2429 to 2529; these read TPTS…APSA and NSKA…PQQL. Over residues 2458–2478 the composition is skewed to low complexity; the sequence is QPKPEMQQQLEQLEQKTNAPQ. The span at 2479-2507 shows a compositional bias: pro residues; the sequence is PKLPQPAAPSLPQPPPQAPPPQCPLPQSS. The segment covering 2508-2521 has biased composition (low complexity); sequence PSPSQLSHLPLKPL. The segment at 2539 to 2561 adopts a C2H2-type 20 zinc-finger fold; it reads YQCDQCKLAFPSFEHWQEHQQLH. The short motif at 2624–2626 is the Nuclear localization signal element; it reads KRK. Residues 2628 to 2656 are disordered; the sequence is EEKASASPGENDSGTGGEEPQRDKRLRTT. The residue at position 2634 (Ser2634) is a Phosphoserine. Residues 2650–2709 constitute a DNA-binding region (homeobox 3); sequence DKRLRTTITPEQLEILYQKYLLDSNPTRKMLDHIAHEVGLKKRVVQVWFQNTRARERKGQ. The C2H2-type 21 zinc-finger motif lies at 2720-2743; the sequence is RRCPFCRALFKAKTALEAHIRSRH. Residues 2780–2789 are compositionally biased toward polar residues; that stretch reads SHLPPSSSDG. Residues 2780-2805 form a disordered region; that stretch reads SHLPPSSSDGQGVPLSPVSKTMELSP. Phosphoserine occurs at positions 2795 and 2804. Lys2815 participates in a covalent cross-link: Glycyl lysine isopeptide (Lys-Gly) (interchain with G-Cter in SUMO1); alternate. Residue Lys2815 forms a Glycyl lysine isopeptide (Lys-Gly) (interchain with G-Cter in SUMO2); alternate linkage. The segment at 2850 to 2877 is disordered; sequence AITDTTTGDEGNADNDSATGIATETKSS. Ser2900 and Ser2904 each carry phosphoserine. The segment at 2920-2955 is disordered; the sequence is VDYSETSSLADPCSPSPGASGSAGKSGDGGDRPGQK. The span at 2929–2944 shows a compositional bias: low complexity; sequence ADPCSPSPGASGSAGK. Positions 2952 to 3011 form a DNA-binding region, homeobox 4; that stretch reads PGQKRFRTQMTNLQLKVLKSCFNDYRTPTMLECEVLGNDIGLPKRVVQVWFQNARAKEKK. The C2H2-type 22 zinc-finger motif lies at 3032–3056; it reads TECTLCGIKYSARLSVRDHIFSQQH. 2 disordered regions span residues 3145–3274 and 3415–3476; these read FTPA…AGTG and QQQQ…SASA. Over residues 3147 to 3156 the composition is skewed to polar residues; sequence PANTALTSPK. Over residues 3181-3199 the composition is skewed to low complexity; sequence PSSASLSSPTPAQATMAMA. Residues 3200-3221 are compositionally biased toward pro residues; that stretch reads PQPPPQPQQPQPPVQQPPPPPA. The segment covering 3222-3234 has biased composition (low complexity); sequence AQQIPAPQLTPQQ. Over residues 3235–3267 the composition is skewed to basic and acidic residues; the sequence is QRKDKDGEKGKEKEKAHKGKGEPLPVPKKEKGE. A Glycyl lysine isopeptide (Lys-Gly) (interchain with G-Cter in SUMO1) cross-link involves residue Lys3262. At Ser3434 the chain carries Phosphoserine. The span at 3435–3453 shows a compositional bias: basic and acidic residues; it reads PDKDPAKESPKPEEQKNVP. Ser3457 bears the Phosphoserine mark. A C2H2-type 23 zinc finger spans residues 3552 to 3576; the sequence is YHCLACESALCGEEALSQHLESALH. The tract at residues 3588–3726 is disordered; sequence AKEHPSLLPH…TSVGTDTFRL (139 aa). Low complexity-rich tracts occupy residues 3605 to 3618 and 3645 to 3677; these read STAS…HSND and SRAS…VQPS. A Phosphoserine modification is found at Ser3616. Position 3700 is a phosphoserine (Ser3700). Over residues 3715–3726 the composition is skewed to polar residues; the sequence is GLTSVGTDTFRL.

Interacts with ALKBH4 and PIAS3. Interacts with FNBP3. Interacts with ESR1, RUNX3, TRIM25, SMAD2 and SMAD3. In terms of processing, phosphorylated at Ser-2634 in both embryonic and adult brain. Phosphorylation at Ser-1600, Ser-2795, Ser-2804, Ser-2900, Ser-3434, Ser-3616 and Ser-3700 is restricted to the embryonic brain. Hyperphosphorylation in embryonic brain protects ZFHX3 from calpain/CAPN1-mediated degradation. Post-translationally, ubiquitinated, leading to its proteasomal degradation. Nuclear localization is essential for its sumoylation. As to expression, expressed in suprachiasmatic nucleus (SCN) of the brain (at protein level). Expressed in skeletal muscle. Levels of expression are high in myoblasts but low in differentiated muscle. Expressed in the heart, primarily in the atria.

The protein resides in the nucleus. It localises to the cytoplasm. In terms of biological role, transcriptional regulator which can act as an activator or a repressor. Inhibits the enhancer element of the AFP gene by binding to its AT-rich core sequence. In concert with SMAD-dependent TGF-beta signaling can repress the transcription of AFP via its interaction with SMAD2/3. Regulates the circadian locomotor rhythms via transcriptional activation of neuropeptidergic genes which are essential for intercellular synchrony and rhythm amplitude in the suprachiasmatic nucleus (SCN) of the brain. Regulator of myoblasts differentiation through the binding to the AT-rich sequence of MYF6 promoter and promoter repression. Down-regulates the MUC5AC promoter in gastric cancer. In association with RUNX3, up-regulates CDKN1A promoter activity following TGF-beta stimulation. This chain is Zinc finger homeobox protein 3 (Zfhx3), found in Mus musculus (Mouse).